A 295-amino-acid chain; its full sequence is MDATPNAVELTVDNAWFIAETIGAGTFPWVLAITMPYSDAAQRGAFVDRQRDELTRMGLLSPQGVINPAVADWIKVVCFPDRWLDLRYVGPASADGACELLRGIVALRTGTGKTSNKTGNGVVALRNAQLVTFTAMDIDDPRALVPILGVGLAHRPPARFDEFSLPTRVGARADERLRSGVPLGEVVDYLGIPASARPVVESVFSGPRSYVEIVAGCNRDGRHTTTEVGLSIVDTSAGRVLVSPSRAFDGEWVSTFSPGTPFAIAVAIQTLTACLPDGQWFPGQRVSRDFSTQSS.

This sequence belongs to the EspG family. In terms of assembly, interacts specifically with ESX-3-dependent PE/PPE proteins.

Its subcellular location is the cytoplasm. Functionally, specific chaperone for cognate PE/PPE proteins. Plays an important role in preventing aggregation of PE/PPE dimers. The protein is ESX-3 secretion-associated protein EspG3 of Mycobacterium tuberculosis (strain CDC 1551 / Oshkosh).